Consider the following 148-residue polypeptide: Lysozyme C, milk isozyme (148 aa).

The signal sequence occupies residues 1–18 (MKALLIVGLLLLSVAVQG). Residues 19-148 (KKFQRCELAR…LRSYVQGCRV (130 aa)) enclose the C-type lysozyme domain. 4 disulfides stabilise this stretch: Cys-24-Cys-146, Cys-48-Cys-134, Cys-83-Cys-99, and Cys-95-Cys-113. Active-site residues include Glu-53 and Asp-71.

The protein belongs to the glycosyl hydrolase 22 family.

It catalyses the reaction Hydrolysis of (1-&gt;4)-beta-linkages between N-acetylmuramic acid and N-acetyl-D-glucosamine residues in a peptidoglycan and between N-acetyl-D-glucosamine residues in chitodextrins.. Lysozymes have primarily a bacteriolytic function; those in tissues and body fluids are associated with the monocyte-macrophage system and enhance the activity of immunoagents. This Bos taurus (Bovine) protein is Lysozyme C, milk isozyme.